Here is a 439-residue protein sequence, read N- to C-terminus: Protein translocase subunit SecY (439 aa).

The next 10 helical transmembrane spans lie at 28-48, 73-93, 127-147, 156-176, 179-199, 220-240, 276-296, 318-338, 375-395, and 401-421; these read ILIT…PVPG, IFSG…LPYI, LTRY…AVWV, PLFT…VMWI, LITE…NIVA, VGGI…IVFV, GVMP…LANF, IYAL…SSLI, LTIL…AVEG, and TFQG…IDTA.

It belongs to the SecY/SEC61-alpha family. Component of the Sec protein translocase complex. Heterotrimer consisting of SecY, SecE and SecG subunits. The heterotrimers can form oligomers, although 1 heterotrimer is thought to be able to translocate proteins. Interacts with the ribosome. Interacts with SecDF, and other proteins may be involved. Interacts with SecA.

The protein resides in the cell inner membrane. Its subcellular location is the cellular thylakoid membrane. Its function is as follows. The central subunit of the protein translocation channel SecYEG. Consists of two halves formed by TMs 1-5 and 6-10. These two domains form a lateral gate at the front which open onto the bilayer between TMs 2 and 7, and are clamped together by SecE at the back. The channel is closed by both a pore ring composed of hydrophobic SecY resides and a short helix (helix 2A) on the extracellular side of the membrane which forms a plug. The plug probably moves laterally to allow the channel to open. The ring and the pore may move independently. The sequence is that of Protein translocase subunit SecY from Synechococcus elongatus (strain ATCC 33912 / PCC 7942 / FACHB-805) (Anacystis nidulans R2).